A 296-amino-acid chain; its full sequence is Glycine N-acyltransferase (296 aa).

An N6-acetyllysine; alternate mark is found at lysine 16, lysine 127, and lysine 141. Lysine 16, lysine 127, and lysine 141 each carry N6-succinyllysine; alternate. The residue at position 159 (lysine 159) is an N6-acetyllysine. At lysine 169 the chain carries N6-succinyllysine. Residues lysine 183 and lysine 256 each carry the N6-acetyllysine; alternate modification. N6-succinyllysine; alternate is present on residues lysine 183 and lysine 256.

It belongs to the glycine N-acyltransferase family.

The protein resides in the mitochondrion. It catalyses the reaction an acyl-CoA + glycine = an N-acylglycine + CoA + H(+). It carries out the reaction benzoyl-CoA + glycine = N-benzoylglycine + CoA + H(+). Functionally, mitochondrial acyltransferase which transfers an acyl group to the N-terminus of glycine and glutamine, although much less efficiently. Can conjugate a multitude of substrates to form a variety of N-acylglycines, thereby detoxify xenobiotics, such as benzoic acid or salicylic acid, and endogenous organic acids, such as isovaleric acid. The polypeptide is Glycine N-acyltransferase (GLYAT) (Pongo abelii (Sumatran orangutan)).